The following is a 282-amino-acid chain: Protein DOG1-like 3 (282 aa).

The DOG1 domain maps to 11 to 254 (EQLQKGCYYE…HEWGRVREEQ (244 aa)).

This is Protein DOG1-like 3 from Arabidopsis thaliana (Mouse-ear cress).